Consider the following 287-residue polypeptide: Cysteine-rich repeat secretory protein 58 (287 aa).

The first 20 residues, 1–20 (METTKKLFALLCLFVTMNQA), serve as a signal peptide directing secretion. The Extracellular segment spans residues 21 to 267 (ISVSDPDDME…GSFSHRGNNK (247 aa)). Gnk2-homologous domains lie at 28 to 130 (DMET…DKFF) and 135 to 246 (ETNP…TYNS). N-linked (GlcNAc...) asparagine glycosylation is found at Asn39, Asn43, Asn59, Asn68, Asn89, Asn99, Asn107, Asn208, and Asn245. A helical membrane pass occupies residues 268-286 (LLGGMVLAVSVSVFAFLSL). Residue Val287 is a topological domain, cytoplasmic.

This sequence belongs to the cysteine-rich repeat secretory protein family.

It localises to the membrane. The polypeptide is Cysteine-rich repeat secretory protein 58 (CRRSP58) (Arabidopsis thaliana (Mouse-ear cress)).